We begin with the raw amino-acid sequence, 104 residues long: Small ribosomal subunit protein uS10 (104 aa).

It belongs to the universal ribosomal protein uS10 family. In terms of assembly, part of the 30S ribosomal subunit.

Its function is as follows. Involved in the binding of tRNA to the ribosomes. The polypeptide is Small ribosomal subunit protein uS10 (Ruegeria pomeroyi (strain ATCC 700808 / DSM 15171 / DSS-3) (Silicibacter pomeroyi)).